The following is a 268-amino-acid chain: NAC transcription factor 29 (268 aa).

The region spanning 9–161 (LPPGFRFHPT…EWVLCRIYKK (153 aa)) is the NAC domain. The DNA-binding element occupies 106-167 (VGVKKALVFY…IYKKRGASKL (62 aa)).

Expressed in senescing leaves, petals and sepals.

The protein localises to the nucleus. Transcription activator that binds to, and transactivates the promoter of the abscisic aldehyde oxidase AAO3. Promotes chlorophyll degradation in leaves by enhancing transcription of AAO3, which leads to increased levels of the senescence-inducing hormone abscisic acid (ABA). Involved in the control of dehydration in senescing leaves. Binds to the DNA sequence 5'-CACGTAAGT-3' of SAG113 promoter. SAG113 acts as a negative regulator of ABA signaling for stomatal closure in leaves, and controls water loss during leaf senescence. Transcription factor of the NAC family involved in senescence. May function in the transition between active cell division and cell expansion. Required for normal seed development and morphology. In Arabidopsis thaliana (Mouse-ear cress), this protein is NAC transcription factor 29 (NAC029).